The chain runs to 373 residues: MKSGRFIGVMSGTSLDGVDVVLAAIDETMVAQQASLTWPIPVHLKKGILDICQGQPLTLSQLGQLDTQLGRLFAQAVNALLAQQRLQPRDIVAIGCHGQTVWHEPTGEAPHTLQIGDNNHIVAHTGITVVGDFRRRDIALGGQGAPLVPAFHHALLGHPTEKRMVLNIGGIANLSLLFPGQAVRGYDTGPGNMLMDAWIWRQCAQPYDKDAAWAKEGQVILPLLQKMLRDPYFAASAPKSTGREYFNYGWLERHLTAFPGADARDVQATLAELTAVSIAQQVLLNGGCERLMVCGGGSRNPLVMARLAALLPGIEVSTTDKAGISGDDMEALAFAWLAWRTLAGLPGNLPSVTGATEASVLGAIYPANPITQS.

Position 12–19 (12–19 (GTSLDGVD)) interacts with ATP.

Belongs to the anhydro-N-acetylmuramic acid kinase family.

The catalysed reaction is 1,6-anhydro-N-acetyl-beta-muramate + ATP + H2O = N-acetyl-D-muramate 6-phosphate + ADP + H(+). Its pathway is amino-sugar metabolism; 1,6-anhydro-N-acetylmuramate degradation. It functions in the pathway cell wall biogenesis; peptidoglycan recycling. Catalyzes the specific phosphorylation of 1,6-anhydro-N-acetylmuramic acid (anhMurNAc) with the simultaneous cleavage of the 1,6-anhydro ring, generating MurNAc-6-P. Is required for the utilization of anhMurNAc either imported from the medium or derived from its own cell wall murein, and thus plays a role in cell wall recycling. This chain is Anhydro-N-acetylmuramic acid kinase, found in Salmonella agona (strain SL483).